Reading from the N-terminus, the 279-residue chain is Hydroxyethylthiazole kinase (279 aa).

Met58 serves as a coordination point for substrate. ATP contacts are provided by Lys134 and Thr180. Residue Gly207 participates in substrate binding.

It belongs to the Thz kinase family. Mg(2+) serves as cofactor.

It carries out the reaction 5-(2-hydroxyethyl)-4-methylthiazole + ATP = 4-methyl-5-(2-phosphooxyethyl)-thiazole + ADP + H(+). The protein operates within cofactor biosynthesis; thiamine diphosphate biosynthesis; 4-methyl-5-(2-phosphoethyl)-thiazole from 5-(2-hydroxyethyl)-4-methylthiazole: step 1/1. Functionally, catalyzes the phosphorylation of the hydroxyl group of 4-methyl-5-beta-hydroxyethylthiazole (THZ). This is Hydroxyethylthiazole kinase from Methanoculleus marisnigri (strain ATCC 35101 / DSM 1498 / JR1).